We begin with the raw amino-acid sequence, 329 residues long: Glycerol-3-phosphate dehydrogenase [NAD(P)+] (329 aa).

Residues Trp-15, His-35, and Lys-107 each coordinate NADPH. Residues Lys-107, Gly-135, and Ser-137 each coordinate sn-glycerol 3-phosphate. Ala-139 is a binding site for NADPH. Residues Lys-190, Asp-243, Ser-253, Arg-254, and Asn-255 each coordinate sn-glycerol 3-phosphate. Residue Lys-190 is the Proton acceptor of the active site. NADPH is bound at residue Arg-254. 2 residues coordinate NADPH: Leu-276 and Glu-278.

This sequence belongs to the NAD-dependent glycerol-3-phosphate dehydrogenase family.

The protein resides in the cytoplasm. It catalyses the reaction sn-glycerol 3-phosphate + NAD(+) = dihydroxyacetone phosphate + NADH + H(+). The catalysed reaction is sn-glycerol 3-phosphate + NADP(+) = dihydroxyacetone phosphate + NADPH + H(+). The protein operates within membrane lipid metabolism; glycerophospholipid metabolism. Its function is as follows. Catalyzes the reduction of the glycolytic intermediate dihydroxyacetone phosphate (DHAP) to sn-glycerol 3-phosphate (G3P), the key precursor for phospholipid synthesis. The sequence is that of Glycerol-3-phosphate dehydrogenase [NAD(P)+] from Rhodopseudomonas palustris (strain HaA2).